Reading from the N-terminus, the 910-residue chain is Protein translocase subunit SecA (910 aa).

ATP is bound by residues Gln86, Gly104–Thr108, and Asp499. 4 residues coordinate Zn(2+): Cys894, Cys896, Cys905, and His906.

Belongs to the SecA family. Monomer and homodimer. Part of the essential Sec protein translocation apparatus which comprises SecA, SecYEG and auxiliary proteins SecDF-YajC and YidC. Zn(2+) serves as cofactor.

It localises to the cell inner membrane. Its subcellular location is the cytoplasm. It carries out the reaction ATP + H2O + cellular proteinSide 1 = ADP + phosphate + cellular proteinSide 2.. Its function is as follows. Part of the Sec protein translocase complex. Interacts with the SecYEG preprotein conducting channel. Has a central role in coupling the hydrolysis of ATP to the transfer of proteins into and across the cell membrane, serving both as a receptor for the preprotein-SecB complex and as an ATP-driven molecular motor driving the stepwise translocation of polypeptide chains across the membrane. In Rickettsia bellii (strain OSU 85-389), this protein is Protein translocase subunit SecA.